Consider the following 409-residue polypeptide: MLGGKKVVLAYSGGLDTSVCLKWFEEQGAEPYALYLDLGQGEPAEDVREKALRIGAREVFVWDAREEFARDYVAPAIKANALYGGRYPLFTALGRPLIAKKLVEAARRVGATHIAHGSTGKGNDQVRFDVTTGSLAPDLTVVAPVRDWNMNRPEEIEYARKHGIPVPVTKESPYSVDQNLWGRSIEAGPLEDPEHEPTPDVFELTAEPEEAPDEPRYVEIGFERGLPTSLDGEKLPLVELIDRLNAIAGEHGVGRVDMIEDRLVGIKSREIYEAPAALVIIQAHRELESLTLTKDVLRFKPAVEQRFAELTYDGLWFTPLKSALDAFVEETQRTVTGSVRLKLYKGSSTVAGRSAPRALYSKDLATYDPESTFDESAAAGFIALWGLPARRWATVNPDPSQAPQPASRR.

Ala-10 to Ser-18 provides a ligand contact to ATP. Position 87 (Tyr-87) interacts with L-citrulline. Gly-117 is a binding site for ATP. The L-aspartate site is built by Thr-119, Asn-123, and Asp-124. Asn-123 contributes to the L-citrulline binding site. L-citrulline-binding residues include Arg-127, Ser-175, Ser-184, Glu-260, and Tyr-272.

The protein belongs to the argininosuccinate synthase family. Type 1 subfamily. Homotetramer.

Its subcellular location is the cytoplasm. The enzyme catalyses L-citrulline + L-aspartate + ATP = 2-(N(omega)-L-arginino)succinate + AMP + diphosphate + H(+). It functions in the pathway amino-acid biosynthesis; L-arginine biosynthesis; L-arginine from L-ornithine and carbamoyl phosphate: step 2/3. In Rubrobacter xylanophilus (strain DSM 9941 / JCM 11954 / NBRC 16129 / PRD-1), this protein is Argininosuccinate synthase.